Reading from the N-terminus, the 1241-residue chain is DNA-directed RNA polymerase subunit beta (1241 aa).

Belongs to the RNA polymerase beta chain family. In terms of assembly, the RNAP catalytic core consists of 2 alpha, 1 beta, 1 beta' and 1 omega subunit. When a sigma factor is associated with the core the holoenzyme is formed, which can initiate transcription.

The catalysed reaction is RNA(n) + a ribonucleoside 5'-triphosphate = RNA(n+1) + diphosphate. Functionally, DNA-dependent RNA polymerase catalyzes the transcription of DNA into RNA using the four ribonucleoside triphosphates as substrates. The sequence is that of DNA-directed RNA polymerase subunit beta from Clostridium botulinum (strain Alaska E43 / Type E3).